A 403-amino-acid chain; its full sequence is F-box/kelch-repeat protein At5g43190 (403 aa).

The region spanning 45-91 is the F-box domain; it reads PNIWSNLPNHLLEHILSLLPFKTLLTLRSISRHLRSLILSPSFISDH. Kelch repeat units lie at residues 91–140, 192–240, 291–339, and 343–393; these read HSFS…LLSS, KIFT…VFYN, ILYM…VCYH, and HVYC…FRWF.

The chain is F-box/kelch-repeat protein At5g43190 from Arabidopsis thaliana (Mouse-ear cress).